The primary structure comprises 63 residues: uncharacterized protein (63 aa).

This is an uncharacterized protein from Bacillus subtilis (strain 168).